The following is a 64-amino-acid chain: Large ribosomal subunit protein uL29 (64 aa).

Belongs to the universal ribosomal protein uL29 family.

This is Large ribosomal subunit protein uL29 from Verminephrobacter eiseniae (strain EF01-2).